Reading from the N-terminus, the 314-residue chain is MATCIDTCRTGNTQDDDSRFCCIKNFFRPGFSVNRKIHHTQIEDDDDVWIKMLEEAKSDVKQEPILSNYYYASITSHRSLESALAHILSVKLSNLNLPSNTLFELFISVLEESPEIIESTKQDLIAVKERDPACISYVHCFLGFKGFLACQAHRIAHTLWKQNRKIVALLIQNRVSESFAVDIHPGAKIGKGILLDHATGVVIGETAVVGDNVSILHGVTLGGTGKQSGDRHPKIGDGVLIGAGSCILGNITIGEGAKIGSGSVVVKDVPARTTAVGNPARLIGGKENPRKHDKIPCLTMDQTSYLTEWSDYVI.

This sequence belongs to the transferase hexapeptide repeat family. Homomultimer. Interacts with OASA1 and CYP20-3. Component of the cysteine synthase complex (CSC) composed of two OAS-TL dimers and one SAT hexamer. As to expression, mostly expressed in leaves. Localized in cortex, trichomes and vascular tissues, particularly in phloem.

It is found in the plastid. Its subcellular location is the chloroplast. The protein localises to the cytoplasm. The enzyme catalyses L-serine + acetyl-CoA = O-acetyl-L-serine + CoA. It functions in the pathway amino-acid biosynthesis; L-cysteine biosynthesis; L-cysteine from L-serine: step 1/2. Serine acetyltransferase which catalyzes the formation of O-acetyl-L-serine from acetyl-CoA and L-serine. Also displays O-acetylserine (thio1)-lyase activity in vitro. May be involved in detoxification process by mediating the production of glutathione. The protein is Serine acetyltransferase 1, chloroplastic (SAT1) of Arabidopsis thaliana (Mouse-ear cress).